A 336-amino-acid chain; its full sequence is Zinc finger protein GFI1 homolog pag-3 (336 aa).

5 consecutive C2H2-type zinc fingers follow at residues 126 to 148 (FHCQKCTKLFSTIAALEQHQQVH), 154 to 176 (FECKQCGKTFKRSSTLSTHLLIH), 182 to 204 (YPCEYCGKRFHQKSDMKKHTYIH), 210 to 232 (HKCTVCGKAFSQSSNLITHTRKH), and 238 to 260 (FACDVCGRTFQRKVDRRRHRESH). The disordered stretch occupies residues 253 to 290 (RRRHRESHHPGHPEECVSASQISSDLSPKGYMTPPTSN).

May interact with transcription factor unc-3. Expressed in the BDU neurons, the touch neurons, the VA, VB and VC motor neurons, two AVF interneurons and unidentified neurons of the retrovesicular ganglion (at protein level).

The protein localises to the nucleus. It is found in the cell projection. Its subcellular location is the axon. The protein resides in the perikaryon. In terms of biological role, transcription factor. Plays a role in the determination of neuroblast cell fate and neuronal differentiation. Negatively modulates expression of several components of dense-core vesicles (DCVs), thereby, in a DCV membrane protein ida-1-dependent manner, regulating neurosecretion. Negatively modulates the transcription of its own gene, the mechanosensory gene mec-3, and also other touch neuron-specific genes in the BDU neurons; required for coordinated movement. Required to determine the identity of BDU sensory neurons in concert with transcription factor unc-86, regulating expression of a number of genes, including transcription factors ceh-14 and ahr-1, neuropeptides flp-10, nlp-1 and nlp-15, and tyramine receptor-encoding ser-2. Acts in concert with non-canonical WNT signaling to negatively modulate transcription of mec-3 gene in BDU neurons. May act in concert with transcription factor unc-3 in motor neuron fate determination. May play a role programmed cell death. The sequence is that of Zinc finger protein GFI1 homolog pag-3 from Caenorhabditis elegans.